We begin with the raw amino-acid sequence, 116 residues long: Protein MGF 110-2L (116 aa).

The N-terminal stretch at 1 to 19 is a signal peptide; that stretch reads MRFFSYLGLLLAGLASLAS.

This sequence belongs to the asfivirus MGF 110 family.

Its function is as follows. Plays a role in virus cell tropism, and may be required for efficient virus replication in macrophages. This Ornithodoros (relapsing fever ticks) protein is Protein MGF 110-2L.